The primary structure comprises 353 residues: O-antigen biosynthesis glycosyltransferase WclY (353 aa).

A helical membrane pass occupies residues 116 to 136 (SLIGGLLWCSIWLFFDKLVIL). Asn-190 and Glu-271 together coordinate UDP. The E(x7)E motif lies at 263-271 (EGFGLTVLE).

Belongs to the glycosyltransferase group 1 family. Glycosyltransferase 4 subfamily.

The protein resides in the membrane. It functions in the pathway bacterial outer membrane biogenesis; LPS O-antigen biosynthesis. Activated by 5mM MnCl(2) and MgCl(2). No significant effect on activity by 5 mM ethylenediaminetetraacetic acid (EDTA), 0.125-0.5% Triton X-100 or dithiothreitol (DTT). Inhibited by 5 mM Zn-acetate. Functionally, involved in the assembly of the O-repeating unit during O-antigen biosynthesis. Glucosyltransferase accountable for the alpha-D-Glc-1,4-beta-D-Gal linkage within the O-antigen. Transfers alpha-1,4-Glc to the Gal moiety of a specific Gal-beta1-3GalNAc-alpha-OPO3-PO3-phenoxyundecyl (Gal-beta1-3GalNAc-PP-PhU) synthetic natural acceptor substrate analog. Requires both Gal-beta1-3GalNAc-alpha and the diphosphate moiety in the acceptor. Not active with GalNAc-PP-PhU, GlcNAc-PP-PhU, Gal-beta1-3GalNAc-alpha-O-benzyl, D-Rha-alpha1-3GlcNAc-alpha-PP-PhU or D-Man-alpha1-3Man-alpha-5-benzamidopentyl (BAP), nor with glycopeptides TTTVTP (Gal-beta1-3GalNAc-alpha-)TPTG or TT (Gal-beta1-3GalNAc-alpha-)TVTPTPTG as acceptor substrates. Has a broad nucleotide sugar donor substrate specificity with ADP-Glc, TDP-Glc and UDP-Glc as superior donors. Gal, GlcNAc, and GalNAc residues are transferred from UDP-sugars, but with low activity. UDP-Xyl, UDP-GlcA, GDP-Fuc or GDP-K-Rha do not act as donors. The chain is O-antigen biosynthesis glycosyltransferase WclY from Escherichia coli.